The sequence spans 630 residues: tRNA uridine 5-carboxymethylaminomethyl modification enzyme MnmG (630 aa).

15–20 (GAGHAG) contacts FAD. 276-290 (GPRYCPSIEDKIVRF) provides a ligand contact to NAD(+).

This sequence belongs to the MnmG family. Homodimer. Heterotetramer of two MnmE and two MnmG subunits. It depends on FAD as a cofactor.

The protein resides in the cytoplasm. In terms of biological role, NAD-binding protein involved in the addition of a carboxymethylaminomethyl (cmnm) group at the wobble position (U34) of certain tRNAs, forming tRNA-cmnm(5)s(2)U34. This is tRNA uridine 5-carboxymethylaminomethyl modification enzyme MnmG from Latilactobacillus sakei subsp. sakei (strain 23K) (Lactobacillus sakei subsp. sakei).